We begin with the raw amino-acid sequence, 536 residues long: UDP-glucuronosyltransferase 2A2 (536 aa).

Residues 1-15 (MVSIRDFTMPKKFVQ) lie on the Cytoplasmic side of the membrane. The chain crosses the membrane as a helical span at residues 16 to 36 (MLVFNLTLTEVVLSGNVLIWP). At 37 to 500 (TDGSHWLNIK…TWFQYHSLDV (464 aa)) the chain is on the lumenal side. Residues Asn58, Asn322, and Asn356 are each glycosylated (N-linked (GlcNAc...) asparagine). A helical membrane pass occupies residues 501–521 (IGFLLVCVTTAIFLVIQCCLF). The Cytoplasmic segment spans residues 522–536 (SCQKFGKIGKKKKRE).

Belongs to the UDP-glycosyltransferase family. In terms of tissue distribution, mainly expressed in the nasal mucosa.

The protein localises to the endoplasmic reticulum membrane. The enzyme catalyses glucuronate acceptor + UDP-alpha-D-glucuronate = acceptor beta-D-glucuronoside + UDP + H(+). It carries out the reaction 17alpha-estradiol + UDP-alpha-D-glucuronate = 17alpha-estradiol 3-O-(beta-D-glucuronate) + UDP + H(+). The catalysed reaction is 17beta-estradiol + UDP-alpha-D-glucuronate = 17beta-estradiol 3-O-(beta-D-glucuronate) + UDP + H(+). It catalyses the reaction chenodeoxycholate + UDP-alpha-D-glucuronate = chenodeoxycholoyl-24-O-(beta-D-glucuronate) + UDP. The enzyme catalyses lithocholate + UDP-alpha-D-glucuronate = lithocholoyl-24-O-(beta-D-glucuronate) + UDP. It carries out the reaction deoxycholate + UDP-alpha-D-glucuronate = deoxycholoyl-24-O-(beta-D-glucuronate) + UDP. The catalysed reaction is hyocholate + UDP-alpha-D-glucuronate = hyocholoyl-24-O-(beta-D-glucuronate) + UDP. It catalyses the reaction hyodeoxycholate + UDP-alpha-D-glucuronate = hyodeoxycholate 6-O-(beta-D-glucuronate) + UDP + H(+). UDP-glucuronosyltransferase (UGT) that catalyzes phase II biotransformation reactions in which lipophilic substrates are conjugated with glucuronic acid to increase the metabolite's water solubility, thereby facilitating excretion into either the urine or bile. Essential for the elimination and detoxification of drugs, xenobiotics and endogenous compounds. Catalyzes the glucuronidation of endogenous estrogen hormone estradiol. Contributes to bile acid (BA) detoxification by catalyzing the glucuronidation of BA substrates, which are natural detergents for dietary lipids absorption. Shows a potential role in detoxification of toxic waste compounds in the amniotic fluid before birth, and air-born chemical after birth. This chain is UDP-glucuronosyltransferase 2A2, found in Homo sapiens (Human).